A 177-amino-acid chain; its full sequence is uncharacterized protein (177 aa).

Helical transmembrane passes span 4-24, 33-53, 80-100, and 115-135; these read IIIL…GFIL, ILSI…LHWI, IAFI…GSFL, and MLGA…LLYV.

The protein resides in the cell membrane. This is an uncharacterized protein from Bacillus subtilis (strain 168).